A 256-amino-acid polypeptide reads, in one-letter code: Thiazole synthase (256 aa).

Catalysis depends on Lys95, which acts as the Schiff-base intermediate with DXP. 1-deoxy-D-xylulose 5-phosphate contacts are provided by residues Gly156, 182 to 183 (AG), and 204 to 205 (NT).

Belongs to the ThiG family. As to quaternary structure, homotetramer. Forms heterodimers with either ThiH or ThiS.

It is found in the cytoplasm. The enzyme catalyses [ThiS sulfur-carrier protein]-C-terminal-Gly-aminoethanethioate + 2-iminoacetate + 1-deoxy-D-xylulose 5-phosphate = [ThiS sulfur-carrier protein]-C-terminal Gly-Gly + 2-[(2R,5Z)-2-carboxy-4-methylthiazol-5(2H)-ylidene]ethyl phosphate + 2 H2O + H(+). It functions in the pathway cofactor biosynthesis; thiamine diphosphate biosynthesis. In terms of biological role, catalyzes the rearrangement of 1-deoxy-D-xylulose 5-phosphate (DXP) to produce the thiazole phosphate moiety of thiamine. Sulfur is provided by the thiocarboxylate moiety of the carrier protein ThiS. In vitro, sulfur can be provided by H(2)S. This Salmonella agona (strain SL483) protein is Thiazole synthase.